An 81-amino-acid chain; its full sequence is Penaeidin-3j (81 aa).

Residues 1 to 19 form the signal peptide; sequence MRLVVCLVFLASFALVCQG. Residue Gln20 is modified to Pyrrolidone carboxylic acid. 3 disulfide bridges follow: Cys50-Cys65, Cys54-Cys72, and Cys66-Cys73. Position 80 is a serine amide (Ser80).

This sequence belongs to the penaeidin family.

The protein resides in the cytoplasmic granule. In terms of biological role, antibacterial and antifungal activity. Presents chitin-binding activity. In Penaeus vannamei (Whiteleg shrimp), this protein is Penaeidin-3j.